The primary structure comprises 101 residues: Replication restart protein PriB (101 aa).

Residues 1-101 (MATNHLVLSG…LHAENVELKT (101 aa)) form the SSB domain.

It belongs to the PriB family. Homodimer. Interacts with PriA and DnaT. Component of the replication restart primosome. Primosome assembly occurs via a 'hand-off' mechanism. PriA binds to replication forks, subsequently PriB then DnaT bind; DnaT then displaces ssDNA to generate the helicase loading substrate.

Involved in the restart of stalled replication forks, which reloads the replicative helicase on sites other than the origin of replication; the PriA-PriB pathway is the major replication restart pathway. During primosome assembly it facilitates complex formation between PriA and DnaT on DNA; stabilizes PriA on DNA. Stimulates the DNA unwinding activity of PriA helicase. The protein is Replication restart protein PriB of Shewanella woodyi (strain ATCC 51908 / MS32).